The sequence spans 1350 residues: MFERINKIKKKIKEKLSYSILKDEKIDYYNLPCPEESASFLSKLTFSWTQRMLMTGYFRGPIQMSDICDLPDDVKVQKTNPILDDIDFGNSKWPLLKFIYTNFVTKNKKSIFIVILCAIFSILSPLCLKYFIKYIQLSKNEKTFLTGLGYCVLLFVGTFSYTLSQQFLYWFGMRTSLHVRGALSQRIYEKMLKLSSSGGKKYSSGSIMNLISTDIGLFADFFWIGHLEIIIFPIQITALLALLCWIVGWSGLVGFGVMIISLPINTFFGSKMSKNLMLSLGYSDTRCNLTSEFINGIRFLKLYAWEKLFLDRIEEQRRLQLKYLYRRVIFAIFEKMLSQTTNAVVLVSTFSVYSINNEIELSVAFTAITIFVNLRQPIMRLPEAIHNLLGLIPSAKRVESFLQLSEIQTQPFINFNNKSINDDILIDNGTFNWNQDNDDYITNNGDNNNNNNKNEIKKRLIEKSEEEYETTTTTTDDNNNNNYESYLLNNINFKAPAGKLTIICGVVGSGKTSLVSGLIGEIYKVSGRVNTPNKISFTTQQSFLLSTSLRENILFGNEMNLERYKKVIEACCLAPDLLQLAAKDLTEIGERGINLSGGQKQRISLARALYANSDCYILDEPLSAVDPEVATHLFNHCIQGMMNDKTRILVTHQLQFIPSADHIVVVDNGKLVQGTYSELKSKGIDFESIMKTKKLNIDNQQQQQQQQQHDENEIIDENPMKKSNSLIESNKLINIDEIISDKHDSNLIEKAKLLVKEDKSEGAIGLHVYREYFKHGSSTFFFIATCVVYFFSQAIFQMTDFWLSTWSQHKLQGKSDSFYIFYYIIFIGLFIVTLVIRYFMLAHVTFSASKNLHTSLLNSVGFASCQFFDTNPSGRILNRFSKDIAEIDLLLYDLFSDVLYCGSTVVFAICVMIYISPLISLPFLVLIIVYNIIKNIYAVSSRDLKRYESITRSPIFSLLQETFNGLVTIRSYQQQNRFISMMQDHININLRLFYYSFSIHRWIGVRLEFISALVVFLTAFFSLFNSNAGFSVLSVTTAIGMCTYLNWAVRQFVELEVKMNSVERIESYINTPKEGNRFTIDNEEEGEENMINLNEKWPSKGEIEFRDVEIRYRPTSEPSLKNLSFKINSNDHIGIVGRTGAGKSTVGISLFRMVECSKGSILIDGIDISKIGLHDLRSSLGIVPQDPFIFSGTIRLNIDPFNKYTDSEIWVALEKVKLKSTISSMPLKLETMIEEGGDGLSFGQKQLLCLSRTILKNSKVVLMDEATSGIDYVTGDLIKQTLLENFNDCTMLTIAHRLDTIIDSTKIAVVDKGELIEYDTPINLINTKNSKFSKLVKYQTDFHKENEKNF.

One can recognise an ABC transmembrane type-1 1 domain in the interval 107-390 (NKKSIFIVIL…LPEAIHNLLG (284 aa)). Transmembrane regions (helical) follow at residues 111 to 131 (IFIV…LKYF), 143 to 163 (TFLT…SYTL), 215 to 235 (IGLF…FPIQ), and 240 to 260 (LALL…VMII). Residues 462-481 (EKSEEEYETTTTTTDDNNNN) are disordered. The span at 470-481 (TTTTTTDDNNNN) shows a compositional bias: low complexity. The ABC transporter 1 domain occupies 473 to 693 (TTTDDNNNNN…IDFESIMKTK (221 aa)). 505 to 512 (GVVGSGKT) contributes to the ATP binding site. In terms of domain architecture, ABC transmembrane type-1 2 spans 774–1061 (KHGSSTFFFI…FVELEVKMNS (288 aa)). The next 6 membrane-spanning stretches (helical) occupy residues 776-796 (GSST…QAIF), 816-836 (DSFY…TLVI), 887-907 (IDLL…TVVF), 909-929 (ICVM…LIIV), 1003-1023 (IGVR…FFSL), and 1029-1049 (GFSV…NWAV). Residues 1103 to 1337 (IEFRDVEIRY…KNSKFSKLVK (235 aa)) enclose the ABC transporter 2 domain. Position 1137–1144 (1137–1144 (GRTGAGKS)) interacts with ATP.

Belongs to the ABC transporter superfamily. ABCC family. Conjugate transporter (TC 3.A.1.208) subfamily.

It localises to the membrane. This chain is ABC transporter C family member 13 (abcC13), found in Dictyostelium discoideum (Social amoeba).